Reading from the N-terminus, the 239-residue chain is Beta-glucanase (239 aa).

A signal peptide spans 1–25 (MKRVLLILVTGLFMSLCGITSSVSA). The region spanning 26 to 239 (QTGGSFFEPF…HYDWMRYRKK (214 aa)) is the GH16 domain. Residues cysteine 57 and cysteine 86 are joined by a disulfide bond. The active-site Nucleophile is glutamate 134.

This sequence belongs to the glycosyl hydrolase 16 family.

It carries out the reaction Hydrolysis of (1-&gt;4)-beta-D-glucosidic linkages in beta-D-glucans containing (1-&gt;3)- and (1-&gt;4)-bonds.. The chain is Beta-glucanase (bglA) from Bacillus amyloliquefaciens (Bacillus velezensis).